The sequence spans 417 residues: MLKKDMNIADYDPELFNAIQNETLRQEEHIELIASENYTSPRVMEAQGSQLTNKYAEGYPGKRYYGGCEYVDVVETLAIERAKQLFGATYANVQPHSGSQANSAVYMALLKPGDTVLGMNLAHGGHLTHGSPVNFSGKLYNIIPYGIDESGKIDYDEMERIAIEHKPKMMIGGFSAYSGIVDWAKMREIADKIGAYLFVDMAHVAGLIAAGVYPNPVPHAHVVTSTTHKTLAGPRGGVILSAADDEELYKKLNSAVFPGGQGGPLMHVIAGKAVAFKEALEPEFKVYQQQVVNNAKAMVEVFLERGYKIVSGGTSNHLMLVDLIGRDLTGKEADAALGSANITVNKNSVPNDPRSPFVTSGVRIGTPAITRRGFKEAEAKQLTGWICDILDDAHNPAVIERVKGQVLALCARFPVYG.

(6S)-5,6,7,8-tetrahydrofolate contacts are provided by residues Leu121 and 125-127 (GHL). Lys229 carries the post-translational modification N6-(pyridoxal phosphate)lysine. Residue 355 to 357 (SPF) coordinates (6S)-5,6,7,8-tetrahydrofolate.

This sequence belongs to the SHMT family. Homodimer. Pyridoxal 5'-phosphate is required as a cofactor.

Its subcellular location is the cytoplasm. The catalysed reaction is (6R)-5,10-methylene-5,6,7,8-tetrahydrofolate + glycine + H2O = (6S)-5,6,7,8-tetrahydrofolate + L-serine. It participates in one-carbon metabolism; tetrahydrofolate interconversion. It functions in the pathway amino-acid biosynthesis; glycine biosynthesis; glycine from L-serine: step 1/1. In terms of biological role, catalyzes the reversible interconversion of serine and glycine with tetrahydrofolate (THF) serving as the one-carbon carrier. This reaction serves as the major source of one-carbon groups required for the biosynthesis of purines, thymidylate, methionine, and other important biomolecules. Also exhibits THF-independent aldolase activity toward beta-hydroxyamino acids, producing glycine and aldehydes, via a retro-aldol mechanism. This chain is Serine hydroxymethyltransferase, found in Shewanella putrefaciens (strain CN-32 / ATCC BAA-453).